Consider the following 149-residue polypeptide: Ribosome maturation factor RimP (149 aa).

Belongs to the RimP family.

It localises to the cytoplasm. In terms of biological role, required for maturation of 30S ribosomal subunits. The protein is Ribosome maturation factor RimP of Neisseria gonorrhoeae (strain NCCP11945).